A 258-amino-acid polypeptide reads, in one-letter code: Probable succinate transporter subunit YjjP (258 aa).

Transmembrane regions (helical) follow at residues 116 to 137 (YPRW…KLNN), 143 to 160 (AVVT…RQLL), 171 to 191 (FCIT…LPAF), 197 to 217 (IAMA…NAVA), and 231 to 251 (WAIA…AMTM).

Belongs to the ThrE exporter (TC 2.A.79) family. As to quaternary structure, the transporter is composed of YjjB and YjjP.

It localises to the cell inner membrane. Functionally, involved in succinate export with YjjB. Both proteins are required for export. Participates in succinate export, but also in the export of other dicarboxylates, such as fumarate and malate. Contributes to succinate production under both aerobic and anaerobic conditions, and increases fumarate and malate production during anaerobic succinate production. The chain is Probable succinate transporter subunit YjjP from Klebsiella aerogenes (strain ATCC 13048 / DSM 30053 / CCUG 1429 / JCM 1235 / KCTC 2190 / NBRC 13534 / NCIMB 10102 / NCTC 10006 / CDC 819-56) (Enterobacter aerogenes).